The primary structure comprises 770 residues: Cullin-1 (770 aa).

A Cullin neddylation domain is found at 700–761 (DRKLQIQAAI…EKEYLMRVEG (62 aa)). Lys-714 is covalently cross-linked (Glycyl lysine isopeptide (Lys-Gly) (interchain with G-Cter in NEDD8)).

This sequence belongs to the cullin family. In terms of assembly, part of a complex that includes culA, fbxA and regA. Formation of this complex is dependent on the MAP kinase erkB. Post-translationally, neddylated; which enhances the ubiquitination activity of SCF.

It functions in the pathway protein modification; protein ubiquitination. Probable core component of cullin-based SCF-like E3 ubiquitin-protein ligase complexes which mediate the ubiquitination and subsequent proteasomal degradation of target proteins. The E3 ubiquitin-protein ligase activity of the complex is dependent on the neddylation of the cullin subunit. Required at several stages during development. CulA and fbxA regulate multicellular development by targeting regA for degradation via a pathway that requires erkB function, leading to an increase in cAMP and PKA activity. This chain is Cullin-1 (culA), found in Dictyostelium discoideum (Social amoeba).